We begin with the raw amino-acid sequence, 252 residues long: Chitooligosaccharide deacetylase (252 aa).

A Mg(2+)-binding site is contributed by histidine 125.

The protein belongs to the YdjC deacetylase family. ChbG subfamily. As to quaternary structure, homodimer. The cofactor is Mg(2+).

It is found in the cytoplasm. The enzyme catalyses N,N'-diacetylchitobiose + H2O = N-acetyl-beta-D-glucosaminyl-(1-&gt;4)-D-glucosamine + acetate. It carries out the reaction diacetylchitobiose-6'-phosphate + H2O = N'-monoacetylchitobiose-6'-phosphate + acetate. Its pathway is glycan degradation; chitin degradation. Functionally, involved in the degradation of chitin. ChbG is essential for growth on the acetylated chitooligosaccharides chitobiose and chitotriose but is dispensable for growth on cellobiose and chitosan dimer, the deacetylated form of chitobiose. Deacetylation of chitobiose-6-P and chitotriose-6-P is necessary for both the activation of the chb promoter by the regulatory protein ChbR and the hydrolysis of phosphorylated beta-glucosides by the phospho-beta-glucosidase ChbF. Catalyzes the removal of only one acetyl group from chitobiose-6-P to yield monoacetylchitobiose-6-P, the inducer of ChbR and the substrate of ChbF. The polypeptide is Chitooligosaccharide deacetylase (Escherichia coli O157:H7).